A 192-amino-acid polypeptide reads, in one-letter code: E3 ubiquitin-protein ligase RNF185 (192 aa).

Polar residues predominate over residues 1–14; it reads MASKGPSASASTEN. Residues 1-30 are disordered; it reads MASKGPSASASTENSSAGGPSGSSNGTGES. Residues 1–130 lie on the Cytoplasmic side of the membrane; sequence MASKGPSASA…GGFQGFGFGD (130 aa). Low complexity predominate over residues 15-27; it reads SSAGGPSGSSNGT. Residues 29–80 are required for ubiquitin ligase activity and protection against ER stress-induced cell death; that stretch reads ESGGQDSTFECNICLDTAKDAVISLCGHLFCWPCLHQWLETRPNRQVCPVCK. The segment at 39-80 adopts an RING-type zinc-finger fold; the sequence is CNICLDTAKDAVISLCGHLFCWPCLHQWLETRPNRQVCPVCK. A disordered region spans residues 90–123; it reads PLYGRGSTGQQDPREKTPPRPQGQRPEPENRGGF. A helical transmembrane segment spans residues 131-151; the sequence is GGFQMSFGIGAFPFGIFATAF. Residues 152-171 are Mitochondrial intermembrane-facing; sequence NINDGRPPPAVPGTPQYVDE. Residues 172-192 traverse the membrane as a helical segment; that stretch reads QFLSRLFLFVALVIMFWLLIA.

Interacts with ATG5 and BNIP1.

It localises to the mitochondrion outer membrane. Its subcellular location is the endoplasmic reticulum membrane. The catalysed reaction is S-ubiquitinyl-[E2 ubiquitin-conjugating enzyme]-L-cysteine + [acceptor protein]-L-lysine = [E2 ubiquitin-conjugating enzyme]-L-cysteine + N(6)-ubiquitinyl-[acceptor protein]-L-lysine.. It functions in the pathway protein modification; protein ubiquitination. E3 ubiquitin-protein ligase that regulates selective mitochondrial autophagy by mediating 'Lys-63'-linked polyubiquitination of BNIP1. Acts in the endoplasmic reticulum (ER)-associated degradation (ERAD) pathway, which targets misfolded proteins that accumulate in the endoplasmic reticulum (ER) for ubiquitination and subsequent proteasome-mediated degradation. Protects cells from ER stress-induced apoptosis. Responsible for the cotranslational ubiquitination and degradation of CFTR in the ERAD pathway. Also acts as a regulator of the innate antiviral response by catalyzing 'Lys-27'-linked polyubiquitination of CGAS, thereby promoting CGAS cyclic GMP-AMP synthase activity. Preferentially associates with the E2 enzymes UBE2J1 and UBE2J2. The sequence is that of E3 ubiquitin-protein ligase RNF185 (Rnf185) from Rattus norvegicus (Rat).